Consider the following 384-residue polypeptide: Actin-binding Rho-activating protein (384 aa).

Residues 1-11 (MARGEKGRGEG) show a composition bias toward basic and acidic residues. 3 disordered regions span residues 1-20 (MARG…LRKV), 32-159 (GWQQ…SPTR), and 181-211 (EQEE…EQDG). A compositionally biased stretch (polar residues) spans 35-47 (QWANENSTRQAQE). The span at 134 to 145 (DGDEPEPEQPES) shows a compositional bias: acidic residues. Ser156 and Ser191 each carry phosphoserine. 2 actin-binding regions span residues 202 to 302 (ETEE…AERA) and 303 to 384 (KRAE…TLLK). 2 interaction with actin regions span residues 243 to 288 (SQVG…GDEG) and 355 to 384 (MRAR…TLLK).

In terms of assembly, binds F-actin and ABLIM1, ABLIM2 and ABLIM3. Interaction with ABLIM2 and ABLIM3 enhances activity. Specifically expressed in heart and skeletal muscles.

The protein localises to the cytoplasm. Its subcellular location is the myofibril. The protein resides in the sarcomere. It is found in the cytoskeleton. In terms of biological role, acts as an activator of serum response factor (SRF)-dependent transcription possibly by inducing nuclear translocation of MKL1 or MKL2 and through a mechanism requiring Rho-actin signaling. The polypeptide is Actin-binding Rho-activating protein (ABRA) (Sus scrofa (Pig)).